Reading from the N-terminus, the 568-residue chain is General O-oligosaccharyltransferase (568 aa).

The next 12 membrane-spanning stretches (helical) occupy residues 17–37 (VAVMRFLLLLLTAVLISLAWL), 46–66 (LTFASEMLSFAAFLSLLALFL), 78–98 (LALPVVFIPMIQWGFGLVVDF), 101–121 (ALLSSAYLLGFWLTMLLGYNL), 132–152 (FTLSSYLLFAVALLTSLIACI), 176–196 (FAQPNNMSTFLILGLLGCLYL), 214–234 (IVFAITLSQSRTAWVFGLFFI), 251–271 (YAVLLWAIGFFAVGLLFPRFT), 349–369 (LLVWNGWLLGGLITICILIWI), 376–396 (AKTTESIIACLMVSAVWIHTL), 397–417 (LEYPLQYAYFLLPVGFLMGLI), and 429–449 (VPVSVIRSIWVIGIMLLALIW).

This sequence belongs to the PglL O-oligosaccharyltransferase family.

Its subcellular location is the cell membrane. Its function is as follows. Catalyzes the O-glycosylation of multiple protein targets. Is responsible for general protein glycosylation within A.baylyi ADP1. Does not act as an O-antigen ligase. The chain is General O-oligosaccharyltransferase from Acinetobacter baylyi (strain ATCC 33305 / BD413 / ADP1).